The primary structure comprises 534 residues: CTP synthase (534 aa).

Residues 1 to 267 (MTKYIFVTGG…DQIVCDHLKL (267 aa)) form an amidoligase domain region. S13 contributes to the CTP binding site. Residue S13 participates in UTP binding. 14–19 (SIGKGI) provides a ligand contact to ATP. Y54 lines the L-glutamine pocket. Residue D71 coordinates ATP. Positions 71 and 141 each coordinate Mg(2+). CTP contacts are provided by residues 148–150 (DIE), 188–193 (KTKPTQ), and K224. UTP-binding positions include 188–193 (KTKPTQ) and K224. 240-242 (RNV) lines the ATP pocket. The Glutamine amidotransferase type-1 domain occupies 292-534 (KIALVGKYVE…FVTAAIKNSN (243 aa)). G354 provides a ligand contact to L-glutamine. C381 (nucleophile; for glutamine hydrolysis) is an active-site residue. L-glutamine contacts are provided by residues 382 to 385 (LGMQ), E405, and R463. Active-site residues include H508 and E510.

It belongs to the CTP synthase family. In terms of assembly, homotetramer.

It catalyses the reaction UTP + L-glutamine + ATP + H2O = CTP + L-glutamate + ADP + phosphate + 2 H(+). The enzyme catalyses L-glutamine + H2O = L-glutamate + NH4(+). The catalysed reaction is UTP + NH4(+) + ATP = CTP + ADP + phosphate + 2 H(+). The protein operates within pyrimidine metabolism; CTP biosynthesis via de novo pathway; CTP from UDP: step 2/2. Allosterically activated by GTP, when glutamine is the substrate; GTP has no effect on the reaction when ammonia is the substrate. The allosteric effector GTP functions by stabilizing the protein conformation that binds the tetrahedral intermediate(s) formed during glutamine hydrolysis. Inhibited by the product CTP, via allosteric rather than competitive inhibition. Its function is as follows. Catalyzes the ATP-dependent amination of UTP to CTP with either L-glutamine or ammonia as the source of nitrogen. Regulates intracellular CTP levels through interactions with the four ribonucleotide triphosphates. The sequence is that of CTP synthase from Streptococcus pyogenes serotype M28 (strain MGAS6180).